A 696-amino-acid chain; its full sequence is DNA topoisomerase 6 subunit B (696 aa).

The interval 1–36 is disordered; sequence MDDDAGDGAASGGTKRKVTAASSSAAAKGKAAGKGK. The span at 20-36 shows a compositional bias: low complexity; sequence AASSSAAAKGKAAGKGK. ATP is bound by residues Asn88, Asp187, 208–209, 217–224, and Lys543; these read TK and GKFGLGAK.

It belongs to the TOP6B family. As to quaternary structure, homodimer. Heterotetramer of two TOP6A and two TOP6B subunits. Interacts with SPO11-4.

Its subcellular location is the nucleus. The enzyme catalyses ATP-dependent breakage, passage and rejoining of double-stranded DNA.. Functionally, component of the DNA topoisomerase VI involved in chromatin organization and progression of endoreduplication cycles. Relaxes both positive and negative superturns and exhibits a strong decatenase activity. The B subunit binds ATP. This is DNA topoisomerase 6 subunit B (TOP6B) from Oryza sativa subsp. japonica (Rice).